Here is a 230-residue protein sequence, read N- to C-terminus: MSLGKRMGAELIGTFWLVLGGCGSAVLAASSPLGIGVLGVAFAFGLTVLTMAFAIGHISGCHLNPAVSFGLVVGGRFPAKELLPYVIAQVIGAILAAGVIYLIASGKAGFELSAGLASNGYADHSPGGYTLGAGFVSEVVMTAMFLVVIMGATDARAPAGFAPIAIGLALTLIHLISIPVTNTSVNPARSTGPALFVGGWALQQLWLFWVAPLIGAAIGGALYRGLAKEP.

2 helical membrane passes run 9 to 29 (AELI…VLAA) and 35 to 55 (IGVL…AFAI). The NPA 1 signature appears at 64–66 (NPA). 3 consecutive transmembrane segments (helical) span residues 83 to 103 (LPYV…IYLI), 131 to 151 (LGAG…VIMG), and 160 to 180 (GFAP…SIPV). An NPA 2 motif is present at residues 186–188 (NPA). A helical membrane pass occupies residues 194–214 (ALFVGGWALQQLWLFWVAPLI).

This sequence belongs to the MIP/aquaporin (TC 1.A.8) family. In terms of assembly, homotetramer.

The protein localises to the cell inner membrane. It catalyses the reaction H2O(in) = H2O(out). Its function is as follows. Channel that permits osmotically driven movement of water in both directions. It is involved in the osmoregulation and in the maintenance of cell turgor during volume expansion in rapidly growing cells. It mediates rapid entry or exit of water in response to abrupt changes in osmolarity. This chain is Aquaporin Z, found in Pseudomonas putida (strain ATCC 47054 / DSM 6125 / CFBP 8728 / NCIMB 11950 / KT2440).